The sequence spans 205 residues: Small ribosomal subunit protein uS4 (205 aa).

The tract at residues 19–45 (IWGRPKSPVNRREYGPGQHGQRRKGKL) is disordered. The region spanning 94-157 (SRLDAVVYRA…KQLVIVLEAV (64 aa)) is the S4 RNA-binding domain.

This sequence belongs to the universal ribosomal protein uS4 family. Part of the 30S ribosomal subunit. Contacts protein S5. The interaction surface between S4 and S5 is involved in control of translational fidelity.

In terms of biological role, one of the primary rRNA binding proteins, it binds directly to 16S rRNA where it nucleates assembly of the body of the 30S subunit. With S5 and S12 plays an important role in translational accuracy. In Brucella anthropi (strain ATCC 49188 / DSM 6882 / CCUG 24695 / JCM 21032 / LMG 3331 / NBRC 15819 / NCTC 12168 / Alc 37) (Ochrobactrum anthropi), this protein is Small ribosomal subunit protein uS4.